Consider the following 502-residue polypeptide: Actin-binding protein WASF3 (502 aa).

Positions 57-93 (NEANNFYIRANSLQDRIDRLAVKVTQLDSTVEEVSLQ) form a coiled coil. Tyr151 is subject to Phosphotyrosine; by ABL1. Residues 162-206 (KEKMLQDTEDKRKEKRRQKEQKRIDGTTREVKKVRKARNRRQEWN) are a coiled coil. Disordered regions lie at residues 169-210 (TEDK…MMAY) and 223-443 (SVYH…ARSD). The span at 182-192 (QKRIDGTTREV) shows a compositional bias: basic and acidic residues. Residues 223-237 (SVYHGASSEGSLSPD) are compositionally biased toward polar residues. Tyr248 is modified (phosphotyrosine; by ABL1). Residues 302 to 312 (QQPPPPPPPQA) show a composition bias toward pro residues. Position 337 is a phosphotyrosine; by ABL1 (Tyr337). 2 stretches are compositionally biased toward pro residues: residues 341-352 (SGPPPPPPPPVI) and 394-410 (APPP…PPGP). Positions 411 to 423 (GSSLSSSPMHGPP) are enriched in low complexity. One can recognise a WH2 domain in the interval 440 to 457 (ARSDLLAAIRMGIQLKKV). At Tyr486 the chain carries Phosphotyrosine; by ABL1.

Belongs to the SCAR/WAVE family. Binds actin and the Arp2/3 complex. In terms of processing, phosphorylation by ABL1 promotes lamellipodia formation and cell migration. As to expression, expressed in ovary and brain.

It is found in the cytoplasm. The protein resides in the cytoskeleton. Functionally, downstream effector molecules involved in the transmission of signals from tyrosine kinase receptors and small GTPases to the actin cytoskeleton. Plays a role in the regulation of cell morphology and cytoskeletal organization. Required in the control of cell shape. The protein is Actin-binding protein WASF3 (WASF3) of Homo sapiens (Human).